The chain runs to 880 residues: DNA mismatch repair protein MutS (880 aa).

ATP is bound at residue 624–631; the sequence is GPNMAGKS.

Belongs to the DNA mismatch repair MutS family.

This protein is involved in the repair of mismatches in DNA. It is possible that it carries out the mismatch recognition step. This protein has a weak ATPase activity. This chain is DNA mismatch repair protein MutS, found in Alkaliphilus metalliredigens (strain QYMF).